Here is a 42-residue protein sequence, read N- to C-terminus: Photosystem I reaction center subunit IX (42 aa).

The chain crosses the membrane as a helical span at residues 7 to 27 (YLSTAPVLAAVWFTVLAGILI).

Belongs to the PsaJ family.

The protein resides in the plastid. Its subcellular location is the chloroplast thylakoid membrane. Functionally, may help in the organization of the PsaE and PsaF subunits. The polypeptide is Photosystem I reaction center subunit IX (Ostreococcus tauri).